Reading from the N-terminus, the 113-residue chain is Iron-sulfur cluster insertion protein ErpA (113 aa).

The iron-sulfur cluster site is built by Cys41, Cys105, and Cys107.

Belongs to the HesB/IscA family. Homodimer. Requires iron-sulfur cluster as cofactor.

Required for insertion of 4Fe-4S clusters for at least IspG. This chain is Iron-sulfur cluster insertion protein ErpA, found in Mannheimia succiniciproducens (strain KCTC 0769BP / MBEL55E).